A 239-amino-acid polypeptide reads, in one-letter code: UDP-2,3-diacylglucosamine hydrolase (239 aa).

Mn(2+)-binding residues include aspartate 8, histidine 10, aspartate 41, asparagine 78, and histidine 113. A substrate-binding site is contributed by asparagine 78–arginine 79. Residues aspartate 121, serine 159, asparagine 163, lysine 166, and histidine 194 each coordinate substrate. 2 residues coordinate Mn(2+): histidine 194 and histidine 196.

It belongs to the LpxH family. The cofactor is Mn(2+).

It is found in the cell inner membrane. The enzyme catalyses UDP-2-N,3-O-bis[(3R)-3-hydroxytetradecanoyl]-alpha-D-glucosamine + H2O = 2-N,3-O-bis[(3R)-3-hydroxytetradecanoyl]-alpha-D-glucosaminyl 1-phosphate + UMP + 2 H(+). It participates in glycolipid biosynthesis; lipid IV(A) biosynthesis; lipid IV(A) from (3R)-3-hydroxytetradecanoyl-[acyl-carrier-protein] and UDP-N-acetyl-alpha-D-glucosamine: step 4/6. Its function is as follows. Hydrolyzes the pyrophosphate bond of UDP-2,3-diacylglucosamine to yield 2,3-diacylglucosamine 1-phosphate (lipid X) and UMP by catalyzing the attack of water at the alpha-P atom. Involved in the biosynthesis of lipid A, a phosphorylated glycolipid that anchors the lipopolysaccharide to the outer membrane of the cell. This is UDP-2,3-diacylglucosamine hydrolase from Shewanella sp. (strain MR-7).